A 355-amino-acid chain; its full sequence is Protein MxiC (355 aa).

Its subcellular location is the secreted. The protein resides in the host cell. Its function is as follows. Necessary for the secretion of IPA invasins. The protein is Protein MxiC (mxiC) of Shigella flexneri.